We begin with the raw amino-acid sequence, 179 residues long: Large ribosomal subunit protein uL5 (179 aa).

This sequence belongs to the universal ribosomal protein uL5 family. In terms of assembly, part of the 50S ribosomal subunit; part of the 5S rRNA/L5/L18/L25 subcomplex. Contacts the 5S rRNA and the P site tRNA. Forms a bridge to the 30S subunit in the 70S ribosome.

Its function is as follows. This is one of the proteins that bind and probably mediate the attachment of the 5S RNA into the large ribosomal subunit, where it forms part of the central protuberance. In the 70S ribosome it contacts protein S13 of the 30S subunit (bridge B1b), connecting the 2 subunits; this bridge is implicated in subunit movement. Contacts the P site tRNA; the 5S rRNA and some of its associated proteins might help stabilize positioning of ribosome-bound tRNAs. This Methylococcus capsulatus (strain ATCC 33009 / NCIMB 11132 / Bath) protein is Large ribosomal subunit protein uL5.